Here is a 156-residue protein sequence, read N- to C-terminus: Small ribosomal subunit protein uS7 (156 aa).

It belongs to the universal ribosomal protein uS7 family. Part of the 30S ribosomal subunit. Contacts proteins S9 and S11.

One of the primary rRNA binding proteins, it binds directly to 16S rRNA where it nucleates assembly of the head domain of the 30S subunit. Is located at the subunit interface close to the decoding center, probably blocks exit of the E-site tRNA. This Bifidobacterium longum (strain NCC 2705) protein is Small ribosomal subunit protein uS7.